Here is a 105-residue protein sequence, read N- to C-terminus: Large ribosomal subunit protein bL34m (105 aa).

A mitochondrion-targeting transit peptide spans 1–16 (MPLFARLCQPQSRRMF).

This sequence belongs to the bacterial ribosomal protein bL34 family. As to quaternary structure, component of the mitochondrial large ribosomal subunit (mt-LSU). Mature yeast 74S mitochondrial ribosomes consist of a small (37S) and a large (54S) subunit. The 37S small subunit contains a 15S ribosomal RNA (15S mt-rRNA) and 34 different proteins. The 54S large subunit contains a 21S rRNA (21S mt-rRNA) and 46 different proteins.

The protein resides in the mitochondrion. Its function is as follows. Component of the mitochondrial ribosome (mitoribosome), a dedicated translation machinery responsible for the synthesis of mitochondrial genome-encoded proteins, including at least some of the essential transmembrane subunits of the mitochondrial respiratory chain. The mitoribosomes are attached to the mitochondrial inner membrane and translation products are cotranslationally integrated into the membrane. The chain is Large ribosomal subunit protein bL34m from Saccharomyces cerevisiae (strain ATCC 204508 / S288c) (Baker's yeast).